An 819-amino-acid polypeptide reads, in one-letter code: Zinc finger protein with KRAB and SCAN domains 5 (819 aa).

Positions 51-132 (QRFKHFQYHE…AVIESIQREL (82 aa)) constitute an SCAN box domain. Residues K214, K246, and K302 each participate in a glycyl lysine isopeptide (Lys-Gly) (interchain with G-Cter in SUMO2) cross-link. The 72-residue stretch at 216 to 287 (EDVADVAVSF…HWVAAERTEK (72 aa)) folds into the KRAB domain. Disordered regions lie at residues 236-263 (SQKSLGRDSRKEDCESTTPVDYEPKEGN) and 283-340 (ERTE…GERG). Residues 240–249 (LGRDSRKEDC) are compositionally biased toward basic and acidic residues. Positions 329-340 (VNRKQKSNGERG) are enriched in basic and acidic residues. 9 consecutive C2H2-type zinc fingers follow at residues 341–363 (HRCGDCGKFFLQASNFIQHRRIH), 369–391 (FKCGECGKSYNQRVHLTQHQRVH), 397–419 (YKCQVCGKAFRVSSHLVQHHSVH), 425–447 (YGCNECGKSFGRHSHLIEHLKRH), 540–562 (HQCNECGKSFIQSAHLIQHRRIH), 568–590 (FRCEECGKSYNQRVHLTQHHRVH), 596–618 (YACHLCGKAFRVRSHLVQHQSVH), 624–646 (FKCNECGKGFGRRSHLAGHLRLH), and 652–674 (HQCHECGEIFFQYVSLLEHQVLH). K700 participates in a covalent cross-link: Glycyl lysine isopeptide (Lys-Gly) (interchain with G-Cter in SUMO2). 3 consecutive C2H2-type zinc fingers follow at residues 708–730 (YQCDSCGKAFSYSSDLIQHYRTH), 764–786 (HQCNECGRGFSLKSHLSQHQRIH), and 792–814 (LQCKECGMSFSWSCSLFKHLRSH). A Glycyl lysine isopeptide (Lys-Gly) (interchain with G-Cter in SUMO2) cross-link involves residue K776.

This sequence belongs to the krueppel C2H2-type zinc-finger protein family. As to expression, testis specific.

Its subcellular location is the nucleus. Functionally, may be involved in transcriptional regulation. This chain is Zinc finger protein with KRAB and SCAN domains 5 (Zkscan5), found in Mus musculus (Mouse).